The primary structure comprises 119 residues: Protein yippee-like 2 (119 aa).

The 98-residue stretch at 19–116 (RTYSCIHCRA…IELAHMIKDN (98 aa)) folds into the Yippee domain. Positions 23, 26, 79, and 82 each coordinate Zn(2+).

It belongs to the yippee family. As to quaternary structure, may interact with FAM168B.

It localises to the nucleus. Its subcellular location is the nucleolus. The chain is Protein yippee-like 2 (YPEL2) from Chlorocebus aethiops (Green monkey).